A 58-amino-acid polypeptide reads, in one-letter code: Small ribosomal subunit protein bS21 (58 aa).

The segment covering 32-42 has biased composition (basic and acidic residues); sequence IRKREHYEKPS. The segment at 32-58 is disordered; it reads IRKREHYEKPSVRRKKKSEAARKRKFN. The span at 43–58 shows a compositional bias: basic residues; it reads VRRKKKSEAARKRKFN.

The protein belongs to the bacterial ribosomal protein bS21 family.

The sequence is that of Small ribosomal subunit protein bS21 from Lachnospira eligens (strain ATCC 27750 / DSM 3376 / VPI C15-48 / C15-B4) (Eubacterium eligens).